We begin with the raw amino-acid sequence, 353 residues long: tRNA-specific 2-thiouridylase MnmA 2 (353 aa).

Residues 9–16 and methionine 35 each bind ATP; that span reads AMSGGVDS. The active-site Nucleophile is cysteine 98. A disulfide bond links cysteine 98 and cysteine 194. Glycine 122 lines the ATP pocket. An interaction with tRNA region spans residues 144–146; that stretch reads KDQ. The active-site Cysteine persulfide intermediate is the cysteine 194. Residues 300–301 form an interaction with tRNA region; that stretch reads RY.

The protein belongs to the MnmA/TRMU family.

It is found in the cytoplasm. It carries out the reaction S-sulfanyl-L-cysteinyl-[protein] + uridine(34) in tRNA + AH2 + ATP = 2-thiouridine(34) in tRNA + L-cysteinyl-[protein] + A + AMP + diphosphate + H(+). Catalyzes the 2-thiolation of uridine at the wobble position (U34) of tRNA, leading to the formation of s(2)U34. The protein is tRNA-specific 2-thiouridylase MnmA 2 of Clostridium botulinum (strain Langeland / NCTC 10281 / Type F).